A 381-amino-acid polypeptide reads, in one-letter code: UDP-4-amino-4-deoxy-L-arabinose--oxoglutarate aminotransferase (381 aa).

K182 carries the N6-(pyridoxal phosphate)lysine modification.

The protein belongs to the DegT/DnrJ/EryC1 family. ArnB subfamily. Homodimer. Pyridoxal 5'-phosphate serves as cofactor.

The catalysed reaction is UDP-4-amino-4-deoxy-beta-L-arabinose + 2-oxoglutarate = UDP-beta-L-threo-pentopyranos-4-ulose + L-glutamate. Its pathway is nucleotide-sugar biosynthesis; UDP-4-deoxy-4-formamido-beta-L-arabinose biosynthesis; UDP-4-deoxy-4-formamido-beta-L-arabinose from UDP-alpha-D-glucuronate: step 2/3. It functions in the pathway bacterial outer membrane biogenesis; lipopolysaccharide biosynthesis. In terms of biological role, catalyzes the conversion of UDP-4-keto-arabinose (UDP-Ara4O) to UDP-4-amino-4-deoxy-L-arabinose (UDP-L-Ara4N). The modified arabinose is attached to lipid A and is required for resistance to polymyxin and cationic antimicrobial peptides. This chain is UDP-4-amino-4-deoxy-L-arabinose--oxoglutarate aminotransferase, found in Photorhabdus laumondii subsp. laumondii (strain DSM 15139 / CIP 105565 / TT01) (Photorhabdus luminescens subsp. laumondii).